The primary structure comprises 378 residues: Probable S-(hydroxymethyl)glutathione dehydrogenase 1 (378 aa).

C47 serves as a coordination point for Zn(2+). H48 contributes to the NAD(+) binding site. 7 residues coordinate Zn(2+): H69, E70, C99, C102, C105, C113, and C176. NAD(+) contacts are provided by residues 201–206 (GCGCVG), D225, 293–295 (IGV), and 318–320 (SAF).

The protein belongs to the zinc-containing alcohol dehydrogenase family. Class-III subfamily. It depends on Zn(2+) as a cofactor.

It catalyses the reaction a primary alcohol + NAD(+) = an aldehyde + NADH + H(+). The enzyme catalyses a secondary alcohol + NAD(+) = a ketone + NADH + H(+). It carries out the reaction S-(hydroxymethyl)glutathione + NADP(+) = S-formylglutathione + NADPH + H(+). The catalysed reaction is S-(hydroxymethyl)glutathione + NAD(+) = S-formylglutathione + NADH + H(+). It catalyses the reaction S-nitrosoglutathione + NADH + H(+) = S-(hydroxysulfenamide)glutathione + NAD(+). In terms of biological role, oxidizes long-chain alcohols and, in the presence of glutathione, is able to oxidize formaldehyde. Also acts as a S-nitroso-glutathione reductase by catalyzing the NADH-dependent reduction of S-nitrosoglutathione, thereby regulating protein S-nitrosylation. This Schizosaccharomyces pombe (strain 972 / ATCC 24843) (Fission yeast) protein is Probable S-(hydroxymethyl)glutathione dehydrogenase 1.